Consider the following 411-residue polypeptide: Glutamate dehydrogenase 2, mitochondrial (411 aa).

A mitochondrion-targeting transit peptide spans 1 to 18; sequence MNALAATSRNFRQAARLL. Lysine 102 is an active-site residue.

The protein belongs to the Glu/Leu/Phe/Val dehydrogenases family. In terms of tissue distribution, expressed in roots. Expressed ubiquitously in various tissues.

It is found in the mitochondrion. It catalyses the reaction L-glutamate + NAD(+) + H2O = 2-oxoglutarate + NH4(+) + NADH + H(+). The catalysed reaction is L-glutamate + NADP(+) + H2O = 2-oxoglutarate + NH4(+) + NADPH + H(+). The chain is Glutamate dehydrogenase 2, mitochondrial (GDH2) from Oryza sativa subsp. japonica (Rice).